Here is a 366-residue protein sequence, read N- to C-terminus: MEEDSPATVCVTGAAGFIGSWLVMRLLERGYVVHATVRDPGDLKKVKHLLELPKAQTNLKLWKADLTQEGSFDEAIQGCHGVFHLATPMDFESKDPENEIIKPTIEGVLSIIRSCVKAKTVKKLVFTSSAGTVNGQEKQLHVYDESHWSDLDFIYSKKMTAWMYFVSKTLAEKAAWDATKGNNISFISIIPTLVVGPFITSTFPPSLVTALSLITGNEAHYSIIKQGQYVHLDDLCECHIYLYENPKAKGRYICSSHDATIHQLAKIIKDKWPEYYIPTKFPGIDEELPIVSFSSKKLIDTGFEFKYNLEDMFKGAIDTCREKGLLPYSTIKNHINGNHVNGVHHYIKNNDDDHEKGLLCCSKEGQ.

NADP(+) contacts are provided by Lys45 and Tyr164.

Belongs to the NAD(P)-dependent epimerase/dehydratase family. Dihydroflavonol-4-reductase subfamily.

The catalysed reaction is a (2R,3S,4S)-leucoanthocyanidin + NADP(+) = a (2R,3R)-dihydroflavonol + NADPH + H(+). It carries out the reaction (2S)-flavan-4-ol + NADP(+) = (2S)-flavanone + NADPH + H(+). The protein operates within pigment biosynthesis; anthocyanin biosynthesis. Its function is as follows. Bifunctional enzyme involved in flavonoid metabolism. The protein is Dihydroflavonol 4-reductase (DFR) of Gerbera hybrida (Daisy).